Reading from the N-terminus, the 90-residue chain is UPF0213 protein Reut_B5558 (90 aa).

The GIY-YIG domain maps to 5–80 (RQWYLYLLEC…KRMSSAQKIA (76 aa)).

This sequence belongs to the UPF0213 family.

The protein is UPF0213 protein Reut_B5558 of Cupriavidus pinatubonensis (strain JMP 134 / LMG 1197) (Cupriavidus necator (strain JMP 134)).